The primary structure comprises 96 residues: MTLRPLHDKVILKREEVETRSAGGIVLTGSAATKSTRGKVIAVSTGRLLENGSVQALAVKAGDVVIFNEGYGVKSEKIDGEEVLILSENDILAIVE.

Belongs to the GroES chaperonin family. Heptamer of 7 subunits arranged in a ring. Interacts with the chaperonin GroEL.

It localises to the cytoplasm. Together with the chaperonin GroEL, plays an essential role in assisting protein folding. The GroEL-GroES system forms a nano-cage that allows encapsulation of the non-native substrate proteins and provides a physical environment optimized to promote and accelerate protein folding. GroES binds to the apical surface of the GroEL ring, thereby capping the opening of the GroEL channel. The sequence is that of Co-chaperonin GroES from Actinobacillus pleuropneumoniae serotype 3 (strain JL03).